The sequence spans 24 residues: Poly-His-poly-Gly peptide 1 (24 aa).

The span at 1 to 13 shows a compositional bias: basic residues; that stretch reads EDDHHHHHHHHHG. The disordered stretch occupies residues 1–24; it reads EDDHHHHHHHHHGVGGGGGGGGGG. Gly residues predominate over residues 14–24; that stretch reads VGGGGGGGGGG.

As to expression, expressed by the venom gland.

The protein resides in the secreted. Functionally, may serve as a metalloproteinase inhibitor during glandular storage. Their inhibition may be instantly disengaged, by dilution or physiochemical change, when venom is injected into tissue of the victim. The polypeptide is Poly-His-poly-Gly peptide 1 (Atheris chlorechis (Western bush viper)).